We begin with the raw amino-acid sequence, 502 residues long: MRIGFDHEKYLEEQSKYILERVNNYDKLYLEFGGKLLFDLHAKRVLPGFDENAKIKLLHKLKEKVEIIICLYAGDIERNKIRGDFGITYDVDVLRLIDDLRGYDLEVNSVVITRYSGQPATNIFINKLERRGIKVYRHEATKGYPTDVDTIVSDEGYGKNPYIETTKPIVVVTAPGPGSGKLATCLSQLYHEYKRGNVAGYSKFETFPVWNVPLKHPLNIAYESATVDLKDVNMIDSFHFDAYNKVAVNYNRDIESFPVLKRIIEKITGEESVYKSPTDMGVNRVGFGIVDDEVVKEASKQEIIRRAFKTACEYKKGYVDKETFHRAKLIMEEMNLKEEDRKVVIPAREYAAKLKERANKSETCTVVALELEDGTILTGRSSELMDGTAAVILNAVKHYANISDEIHLISPVILEPIINLKAKTLGSKRTALSCEEVLIALSICAATNPTAQVAMGKLPMLKGCQAHSTTILSTNEEQTFRKLGIDVTCDPEYISESLYYNN.

It belongs to the UPF0371 family.

In Clostridium botulinum (strain Okra / Type B1), this protein is UPF0371 protein CLD_0424.